Reading from the N-terminus, the 173-residue chain is Ribosome maturation factor RimM (173 aa).

Positions 92 to 165 (EDEYYHTDLI…RVVVALPQEI (74 aa)) constitute a PRC barrel domain.

The protein belongs to the RimM family. As to quaternary structure, binds ribosomal protein uS19.

The protein resides in the cytoplasm. In terms of biological role, an accessory protein needed during the final step in the assembly of 30S ribosomal subunit, possibly for assembly of the head region. Essential for efficient processing of 16S rRNA. May be needed both before and after RbfA during the maturation of 16S rRNA. It has affinity for free ribosomal 30S subunits but not for 70S ribosomes. The polypeptide is Ribosome maturation factor RimM (Bradyrhizobium diazoefficiens (strain JCM 10833 / BCRC 13528 / IAM 13628 / NBRC 14792 / USDA 110)).